The following is a 456-amino-acid chain: Phosphomethylpyrimidine synthase (456 aa).

Substrate-binding positions include Asn-80, Met-109, Tyr-139, His-175, 195–197 (SRG), 236–239 (DSLR), and Glu-275. His-279 is a binding site for Zn(2+). Tyr-302 provides a ligand contact to substrate. Residue His-343 coordinates Zn(2+). Cys-423, Cys-426, and Cys-431 together coordinate [4Fe-4S] cluster.

It belongs to the ThiC family. It depends on [4Fe-4S] cluster as a cofactor.

The catalysed reaction is 5-amino-1-(5-phospho-beta-D-ribosyl)imidazole + S-adenosyl-L-methionine = 4-amino-2-methyl-5-(phosphooxymethyl)pyrimidine + CO + 5'-deoxyadenosine + formate + L-methionine + 3 H(+). Its pathway is cofactor biosynthesis; thiamine diphosphate biosynthesis. Its function is as follows. Catalyzes the synthesis of the hydroxymethylpyrimidine phosphate (HMP-P) moiety of thiamine from aminoimidazole ribotide (AIR) in a radical S-adenosyl-L-methionine (SAM)-dependent reaction. This is Phosphomethylpyrimidine synthase from Prochlorococcus marinus (strain AS9601).